The primary structure comprises 84 residues: Large ribosomal subunit protein bL27 (84 aa).

A disordered region spans residues 1 to 20; the sequence is MAHKKAGGSTRNGRDSHSKR.

It belongs to the bacterial ribosomal protein bL27 family.

This chain is Large ribosomal subunit protein bL27, found in Blochmanniella pennsylvanica (strain BPEN).